Here is a 744-residue protein sequence, read N- to C-terminus: Elongation factor G, mitochondrial (744 aa).

The N-terminal 25 residues, 1-25 (MTISCLLRIRPALAKSFFENGQRAF), are a transit peptide targeting the mitochondrion. The 278-residue stretch at 38 to 315 (ERIRNIGISA…AVLDYLPNPG (278 aa)) folds into the tr-type G domain. GTP is bound by residues 47 to 54 (AHIDSGKT), 114 to 118 (DTPGH), and 168 to 171 (NKLD).

Belongs to the TRAFAC class translation factor GTPase superfamily. Classic translation factor GTPase family. EF-G/EF-2 subfamily.

It localises to the mitochondrion. It participates in protein biosynthesis; polypeptide chain elongation. Mitochondrial GTPase that catalyzes the GTP-dependent ribosomal translocation step during translation elongation. During this step, the ribosome changes from the pre-translocational (PRE) to the post-translocational (POST) state as the newly formed A-site-bound peptidyl-tRNA and P-site-bound deacylated tRNA move to the P and E sites, respectively. Catalyzes the coordinated movement of the two tRNA molecules, the mRNA and conformational changes in the ribosome. The chain is Elongation factor G, mitochondrial from Culex quinquefasciatus (Southern house mosquito).